A 308-amino-acid chain; its full sequence is Phosphoribosylaminoimidazole-succinocarboxamide synthase (308 aa).

Belongs to the SAICAR synthetase family.

It catalyses the reaction 5-amino-1-(5-phospho-D-ribosyl)imidazole-4-carboxylate + L-aspartate + ATP = (2S)-2-[5-amino-1-(5-phospho-beta-D-ribosyl)imidazole-4-carboxamido]succinate + ADP + phosphate + 2 H(+). It functions in the pathway purine metabolism; IMP biosynthesis via de novo pathway; 5-amino-1-(5-phospho-D-ribosyl)imidazole-4-carboxamide from 5-amino-1-(5-phospho-D-ribosyl)imidazole-4-carboxylate: step 1/2. The sequence is that of Phosphoribosylaminoimidazole-succinocarboxamide synthase from Stenotrophomonas maltophilia (strain R551-3).